The chain runs to 451 residues: 23S rRNA (uracil(1939)-C(5))-methyltransferase RlmD (451 aa).

One can recognise a TRAM domain in the interval 20 to 78 (QIPAGKKQRLTIERLSDDGRGIAFLEGKTWFVAGSLAGEEVEARVLNARGKVVEARTER). Residues Cys-91, Cys-97, Cys-100, and Cys-179 each coordinate [4Fe-4S] cluster. S-adenosyl-L-methionine contacts are provided by Gln-283, Phe-312, Asn-317, Glu-333, Asp-360, and Asp-381. Cys-407 serves as the catalytic Nucleophile.

The protein belongs to the class I-like SAM-binding methyltransferase superfamily. RNA M5U methyltransferase family. RlmD subfamily.

The enzyme catalyses uridine(1939) in 23S rRNA + S-adenosyl-L-methionine = 5-methyluridine(1939) in 23S rRNA + S-adenosyl-L-homocysteine + H(+). Catalyzes the formation of 5-methyl-uridine at position 1939 (m5U1939) in 23S rRNA. The polypeptide is 23S rRNA (uracil(1939)-C(5))-methyltransferase RlmD (Pseudomonas savastanoi pv. phaseolicola (strain 1448A / Race 6) (Pseudomonas syringae pv. phaseolicola (strain 1448A / Race 6))).